Reading from the N-terminus, the 680-residue chain is Epithelial splicing regulatory protein 1 (680 aa).

RRM domains follow at residues 224–301, 325–405, and 444–524; these read TVVR…KATG, VIVR…RSTA, and DCIR…QCSA. Serine 542 is modified (phosphoserine). Arginine 581 is subject to Omega-N-methylarginine.

Belongs to the ESRP family. As to expression, epithelial cell-specific. Epithelial-specific expression in diverse tissues and organs with particularly notable levels of expression in skin and gastrointestinal epithelia.

The protein resides in the nucleus. In terms of biological role, mRNA splicing factor that regulates the formation of epithelial cell-specific isoforms. Specifically regulates the expression of FGFR2-IIIb, an epithelial cell-specific isoform of FGFR2. Also regulates the splicing of CD44, CTNND1, ENAH, 3 transcripts that undergo changes in splicing during the epithelial-to-mesenchymal transition (EMT). Acts by directly binding specific sequences in mRNAs. Binds the GU-rich sequence motifs in the ISE/ISS-3, a cis-element regulatory region present in the mRNA of FGFR2. Regulates splicing and expression of genes involved in inner ear development, auditory hair cell differentiation, and cell fate specification in the cochlear epithelium. The sequence is that of Epithelial splicing regulatory protein 1 (Esrp1) from Mus musculus (Mouse).